Reading from the N-terminus, the 487-residue chain is Protein SMG9 (487 aa).

Disordered regions lie at residues 30 to 83 (EDAA…PPAL) and 136 to 164 (RDKG…LQPP). Positions 42 to 70 (LKKDRDREQETWDRERDKDRKLERDREAE) are enriched in basic and acidic residues.

The protein belongs to the SMG9 family.

Its function is as follows. Involved in nonsense-mediated decay (NMD) of mRNAs containing premature stop codons. Probable component of kinase complex containing nonC and recruited to stalled ribosomes. The polypeptide is Protein SMG9 (Drosophila melanogaster (Fruit fly)).